The chain runs to 203 residues: MAKEIAKSLLDIEAVTLSPNDLYTWSSGIKSPIYCDNRVTLGYPLVRGAIRDGLINLIKEHFPEVEVISGTATAGIPHAAFIAEKLKLPMNYVRSSNKSHGKQNQIEGAKSEGKKVVVIEDLISTGGSSVTAVEALKLAGAEVLGVVAIFTYGLKKADDTFSNIQLPFYTLSDYNELIEVAENEGKISSEDIQTLVEWRDNLA.

Residues R94, K98, H100, and 120–128 (EDLISTGGS) contribute to the 5-phospho-alpha-D-ribose 1-diphosphate site. Residue S124 coordinates orotate.

Belongs to the purine/pyrimidine phosphoribosyltransferase family. PyrE subfamily. As to quaternary structure, homodimer. The cofactor is Mg(2+).

It catalyses the reaction orotidine 5'-phosphate + diphosphate = orotate + 5-phospho-alpha-D-ribose 1-diphosphate. The protein operates within pyrimidine metabolism; UMP biosynthesis via de novo pathway; UMP from orotate: step 1/2. Functionally, catalyzes the transfer of a ribosyl phosphate group from 5-phosphoribose 1-diphosphate to orotate, leading to the formation of orotidine monophosphate (OMP). The polypeptide is Orotate phosphoribosyltransferase (Staphylococcus aureus (strain COL)).